The chain runs to 257 residues: Neurotrophin-3 (257 aa).

A signal peptide spans 1-18 (MSILFYVIFLAYLRGIQS). A propeptide spanning residues 19 to 138 (TNMDQRSLPE…VLNRTSRRKR (120 aa)) is cleaved from the precursor. Asn131 carries an N-linked (GlcNAc...) asparagine glycan. 3 cysteine pairs are disulfide-bonded: Cys152–Cys217, Cys195–Cys246, and Cys205–Cys248.

Belongs to the NGF-beta family. In terms of tissue distribution, in the embryo, the expression peak at E4.5 and decreases at later stages of development.

Its subcellular location is the secreted. In terms of biological role, seems to promote the survival of visceral and proprioceptive sensory neurons. This is Neurotrophin-3 (NTF3) from Gallus gallus (Chicken).